The sequence spans 294 residues: Probable porphobilinogen deaminase (294 aa).

Position 233 is an S-(dipyrrolylmethanemethyl)cysteine (Cys233).

Belongs to the HMBS family. Requires dipyrromethane as cofactor.

The catalysed reaction is 4 porphobilinogen + H2O = hydroxymethylbilane + 4 NH4(+). It participates in porphyrin-containing compound metabolism; protoporphyrin-IX biosynthesis; coproporphyrinogen-III from 5-aminolevulinate: step 2/4. In terms of biological role, tetrapolymerization of the monopyrrole PBG into the hydroxymethylbilane pre-uroporphyrinogen in several discrete steps. The sequence is that of Probable porphobilinogen deaminase from Sulfurisphaera tokodaii (strain DSM 16993 / JCM 10545 / NBRC 100140 / 7) (Sulfolobus tokodaii).